The chain runs to 352 residues: Sodium-lithium/proton antiporter (352 aa).

8 consecutive transmembrane segments (helical) span residues 11 to 31, 32 to 52, 61 to 81, 159 to 179, 216 to 236, 241 to 261, 271 to 291, and 317 to 337; these read ILLL…PVSV, PLII…WMQF, AVTI…TYAV, IPEY…FMLE, AQFL…FWIT, IVMS…SIVI, IVGD…LLAI, and IGLQ…VIAF.

Belongs to the autoinducer-2 exporter (AI-2E) (TC 2.A.86) family.

The protein resides in the cell membrane. Catalyzes the pH-dependent efflux of sodium and lithium in exchange for external protons. This Halobacillus andaensis protein is Sodium-lithium/proton antiporter.